The sequence spans 309 residues: ATP synthase gamma chain (309 aa).

It belongs to the ATPase gamma chain family. As to quaternary structure, F-type ATPases have 2 components, CF(1) - the catalytic core - and CF(0) - the membrane proton channel. CF(1) has five subunits: alpha(3), beta(3), gamma(1), delta(1), epsilon(1). CF(0) has three main subunits: a, b and c.

Its subcellular location is the cell membrane. Its function is as follows. Produces ATP from ADP in the presence of a proton gradient across the membrane. The gamma chain is believed to be important in regulating ATPase activity and the flow of protons through the CF(0) complex. This is ATP synthase gamma chain from Salinispora arenicola (strain CNS-205).